A 520-amino-acid polypeptide reads, in one-letter code: Transposase for insertion sequence element IS21-like (520 aa).

The HTH IS21-type domain occupies 13–78 (YMWYKVRELQ…KYEEYVRGTL (66 aa)). The Integrase catalytic domain occupies 136–312 (LPETPYGEYA…VPSEEFAVEK (177 aa)).

The protein belongs to the transposase IS21/IS408/IS1162 family.

Involved in the transposition of the insertion sequence. This is Transposase for insertion sequence element IS21-like (tnpA) from Bacteroides fragilis.